We begin with the raw amino-acid sequence, 62 residues long: Metallothionein-4 (62 aa).

Positions 6, 8, 14, 16, 20, 22, 25, 27, 30, 34, 35, 37, 38, 42, 45, 49, 51, 58, 60, and 61 each coordinate a divalent metal cation.

The protein belongs to the metallothionein superfamily. Type 1 family.

In terms of biological role, seems to bind zinc and copper. Could play a special role in regulating zinc metabolism during the differentiation of stratified epithelia. This Canis lupus familiaris (Dog) protein is Metallothionein-4 (MT4).